The primary structure comprises 229 residues: MLVVSELSKSYPTAGEPLSVLRGVNLELSPGQSAAIVGPSGSGKTTLLQILGTLDEPDSGSVQINGQDPFALDARERAAYRNQTIGFIFQDHHLLPQLSVTENVLIPALANGKPTSDDVSRAAELIDAVGLSHRATHLPRELSGGERERVAIARALLMQPSVVLADEPTGNLDSKTAKTITELLLRLQAEQNTVLVTVTHSLSLADEMNERFELVDGALVRRGRFGITA.

The ABC transporter domain occupies 2-229; sequence LVVSELSKSY…VRRGRFGITA (228 aa). 38–45 is a binding site for ATP; sequence GPSGSGKT.

Belongs to the ABC transporter superfamily. Lipoprotein translocase (TC 3.A.1.125) family. As to quaternary structure, the complex is composed of two ATP-binding proteins (LolD) and two transmembrane proteins (LolC and LolE).

The protein localises to the cell inner membrane. Its function is as follows. Part of the ABC transporter complex LolCDE involved in the translocation of mature outer membrane-directed lipoproteins, from the inner membrane to the periplasmic chaperone, LolA. Responsible for the formation of the LolA-lipoprotein complex in an ATP-dependent manner. This chain is Lipoprotein-releasing system ATP-binding protein LolD 1, found in Rhodopirellula baltica (strain DSM 10527 / NCIMB 13988 / SH1).